The following is a 439-amino-acid chain: Elongation factor 1-alpha 2 (439 aa).

A tr-type G domain is found at 6–229 (KDHLNLVVIG…DEFKVPKRPI (224 aa)). The segment at 15–22 (GHVDSGKS) is G1. GTP is bound at residue 15-22 (GHVDSGKS). The interval 71-75 (GITIN) is G2. The segment at 92–95 (DAPG) is G3. Residues 92–96 (DAPGH) and 154–157 (NKMD) each bind GTP. A G4 region spans residues 154 to 157 (NKMD). Residues 193 to 195 (SGF) form a G5 region.

It belongs to the TRAFAC class translation factor GTPase superfamily. Classic translation factor GTPase family. EF-Tu/EF-1A subfamily.

Its subcellular location is the cytoplasm. Its function is as follows. This protein promotes the GTP-dependent binding of aminoacyl-tRNA to the A-site of ribosomes during protein biosynthesis. The chain is Elongation factor 1-alpha 2 (EFA2) from Euplotes crassus.